The sequence spans 143 residues: Nucleoside diphosphate kinase (143 aa).

Lys11, Phe59, Arg87, Thr93, Arg104, and Asn114 together coordinate ATP. His117 functions as the Pros-phosphohistidine intermediate in the catalytic mechanism.

Belongs to the NDK family. As to quaternary structure, homotetramer. It depends on Mg(2+) as a cofactor.

The protein localises to the cytoplasm. It catalyses the reaction a 2'-deoxyribonucleoside 5'-diphosphate + ATP = a 2'-deoxyribonucleoside 5'-triphosphate + ADP. The enzyme catalyses a ribonucleoside 5'-diphosphate + ATP = a ribonucleoside 5'-triphosphate + ADP. In terms of biological role, major role in the synthesis of nucleoside triphosphates other than ATP. The ATP gamma phosphate is transferred to the NDP beta phosphate via a ping-pong mechanism, using a phosphorylated active-site intermediate. In Shewanella oneidensis (strain ATCC 700550 / JCM 31522 / CIP 106686 / LMG 19005 / NCIMB 14063 / MR-1), this protein is Nucleoside diphosphate kinase.